The sequence spans 308 residues: uncharacterized protein (308 aa).

The region spanning 1-60 is the HTH lysR-type domain; the sequence is MNYSLKQLKVFVTVAQEKSFSRAGERIGLSQSAVSHSVKELENHTGVRLLDRTTREVVLT. A DNA-binding region (H-T-H motif) is located at residues 20–39; that stretch reads FSRAGERIGLSQSAVSHSVK.

This sequence belongs to the LysR transcriptional regulatory family.

This is an uncharacterized protein from Shigella flexneri.